Consider the following 128-residue polypeptide: Fluoride-specific ion channel FluC (128 aa).

4 helical membrane-spanning segments follow: residues Ala-7–Val-27, Thr-34–Ile-54, Leu-70–Ile-90, and Leu-104–Ala-124. Residues Gly-78 and Thr-81 each contribute to the Na(+) site.

The protein belongs to the fluoride channel Fluc/FEX (TC 1.A.43) family.

It is found in the cell inner membrane. It carries out the reaction fluoride(in) = fluoride(out). Na(+) is not transported, but it plays an essential structural role and its presence is essential for fluoride channel function. Functionally, fluoride-specific ion channel. Important for reducing fluoride concentration in the cell, thus reducing its toxicity. This chain is Fluoride-specific ion channel FluC, found in Prosthecochloris aestuarii (strain DSM 271 / SK 413).